A 198-amino-acid chain; its full sequence is Regulation of enolase protein 1 (198 aa).

The protein resides in the cytoplasm. In terms of biological role, functions in the galactose metabolic pathway via the GAL83 protein and that it may control the level of ENO1. The polypeptide is Regulation of enolase protein 1 (REE1) (Saccharomyces cerevisiae (strain ATCC 204508 / S288c) (Baker's yeast)).